The sequence spans 502 residues: Peroxisomal catalase (502 aa).

Residues His64 and Asn137 contribute to the active site. Heme is bound at residue Tyr347. The Microbody targeting signal motif lies at 500–502 (AKM).

It belongs to the catalase family. Heme serves as cofactor.

Its subcellular location is the peroxisome matrix. It catalyses the reaction 2 H2O2 = O2 + 2 H2O. Its function is as follows. Catalyzes the degradation of hydrogen peroxide (H(2)O(2)) generated by peroxisomal oxidases to water and oxygen, thereby protecting cells from the toxic effects of hydrogen peroxide. This is Peroxisomal catalase from Toxoplasma gondii.